Consider the following 326-residue polypeptide: MKQDATRNAAYTVDCEDYVHVVEFNPFESGDSGNLIAYGGSNYVVVGMCTFQEEETDIEGIQYKTLRTFHHGVRVDGIAWSPETKLDSLPPVIKFCTSAADLKIRLFTSDLQDKNEYKVLEGHSDFINDLVFHPKEGQELASVSDDHTCRIWNLEGKQTAHFLLHSPGMSVCWHPEETFKLMVAEKNGTIRFYDLMAQQAILSLQSEQTPLMSAHWCLKNTFKVGAVAGNDWIIWDITRSSYPQETRPVHMDRAHLFRWSAISENLFATTGYPGKMASQFQIHHLGHSQPVLIGSVAVGSGLSWHRTLPLCAVGGDHKLLFWVTEI.

WD repeat units lie at residues 70–117 (HHGV…KNEY), 122–162 (GHSD…TAHF), 164–203 (LHSPGMSVCWHPEETFKLMVAEKNGTIRFYDLMAQQAILS), and 294–325 (GSVAVGSGLSWHRTLPLCAVGGDHKLLFWVTE).

In terms of assembly, component of the Nup107-160 subcomplex of the nuclear pore complex (NPC). The Nup107-160 subcomplex includes NUP160, NUP133, NUP107, NUP98, NUP85, NUP43, NUP37, SEH1 and SEC13.

The protein resides in the chromosome. It localises to the centromere. It is found in the kinetochore. The protein localises to the nucleus. Its subcellular location is the nuclear pore complex. Functionally, component of the Nup107-160 subcomplex of the nuclear pore complex (NPC). The Nup107-160 subcomplex is required for the assembly of a functional NPC. The Nup107-160 subcomplex is also required for normal kinetochore microtubule attachment, mitotic progression and chromosome segregation. The sequence is that of Nucleoporin Nup37 (Nup37) from Mus musculus (Mouse).